A 184-amino-acid polypeptide reads, in one-letter code: Large ribosomal subunit protein uL6 (184 aa).

The protein belongs to the universal ribosomal protein uL6 family. In terms of assembly, part of the 50S ribosomal subunit.

In terms of biological role, this protein binds to the 23S rRNA, and is important in its secondary structure. It is located near the subunit interface in the base of the L7/L12 stalk, and near the tRNA binding site of the peptidyltransferase center. The chain is Large ribosomal subunit protein uL6 from Pyrococcus furiosus (strain ATCC 43587 / DSM 3638 / JCM 8422 / Vc1).